Consider the following 211-residue polypeptide: Glycerol-3-phosphate acyltransferase (211 aa).

The next 4 membrane-spanning stretches (helical) occupy residues 5–25 (ALGM…ILFC), 80–100 (PLYL…PVFF), 112–132 (FGAI…TWLL), and 138–158 (GYSS…VWWF).

The protein belongs to the PlsY family. Probably interacts with PlsX.

The protein resides in the cell inner membrane. It carries out the reaction an acyl phosphate + sn-glycerol 3-phosphate = a 1-acyl-sn-glycero-3-phosphate + phosphate. It participates in lipid metabolism; phospholipid metabolism. Functionally, catalyzes the transfer of an acyl group from acyl-phosphate (acyl-PO(4)) to glycerol-3-phosphate (G3P) to form lysophosphatidic acid (LPA). This enzyme utilizes acyl-phosphate as fatty acyl donor, but not acyl-CoA or acyl-ACP. This Pectobacterium carotovorum subsp. carotovorum (strain PC1) protein is Glycerol-3-phosphate acyltransferase.